Consider the following 381-residue polypeptide: Putative F-box protein At4g17200 (381 aa).

The region spanning 1–47 (MTTMSDLSPDLVGEILTRVPMTSLISVRCTCKMWNALSKEGIFFKAA) is the F-box domain.

This Arabidopsis thaliana (Mouse-ear cress) protein is Putative F-box protein At4g17200.